A 675-amino-acid polypeptide reads, in one-letter code: G-protein-signaling modulator 1 (675 aa).

The tract at residues 1 to 509 (MAGPAPPVAD…DLLTKFQSSR (509 aa)) is mediates association with membranes. 9 TPR repeats span residues 28–61 (CLEL…GTED), 66–99 (SAIY…ARTI), 106–139 (AKAS…AQEQ), 146–181 (ARAL…PPDV), 183–202 (ETLC…VKEL), 209–242 (GRAY…AKEF), 249–282 (RRAY…SRQL), 289–322 (AQAC…AQEL), and 329–362 (GRAC…SQEI). Positions 364–487 (DRHGELTARM…VRVHVPRTSI (124 aa)) are interaction with STK11/LKB1. A disordered region spans residues 391–412 (SEKPDLAGYEAQGARPKRTQRL). Phosphoserine is present on S413. R421 carries the post-translational modification Omega-N-methylarginine. Positions 424–442 (LEREQNGDSHHSGDWRGPS) are enriched in basic and acidic residues. Residues 424–492 (LEREQNGDSH…PRTSIPRAPS (69 aa)) form a disordered region. 5 positions are modified to phosphoserine: S445, S469, S471, S492, and S493. The span at 454–469 (KYQEGPDAERRPREGS) shows a compositional bias: basic and acidic residues. One can recognise a GoLoco 1 domain in the interval 495–517 (EECFFDLLTKFQSSRMDDQRCPL). A phosphoserine mark is found at S545 and S569. GoLoco domains lie at 548 to 570 (TEEF…RASV), 596 to 618 (GDDF…RCPP), and 630 to 652 (DEDF…RVDL). Disordered stretches follow at residues 610 to 630 (RIDD…TMPD) and 644 to 675 (RMDE…PGAS).

It belongs to the GPSM family. As to quaternary structure, interacts with GNAI1, GNAI2 and GNAI3 preferentially in their GDP-bound state. May also interact with GNAO1. Interacts with STK11/LKB1 and MACF1. Interacts with INSC/inscuteable and FRMPD1. Phosphorylation regulates interaction with G(i/o) alpha. In terms of tissue distribution, expressed in intestinal cells.

The protein resides in the cytoplasm. The protein localises to the cytosol. It is found in the endoplasmic reticulum membrane. Its subcellular location is the golgi apparatus membrane. It localises to the cell membrane. In terms of biological role, guanine nucleotide dissociation inhibitor (GDI) which functions as a receptor-independent activator of heterotrimeric G-protein signaling. Keeps G(i/o) alpha subunit in its GDP-bound form thus uncoupling heterotrimeric G-proteins signaling from G protein-coupled receptors. Controls spindle orientation and asymmetric cell fate of cerebral cortical progenitors. May also be involved in macroautophagy in intestinal cells. May play a role in drug addiction. This chain is G-protein-signaling modulator 1 (GPSM1), found in Homo sapiens (Human).